The following is a 354-amino-acid chain: Tribbles homolog 3 (354 aa).

The segment at 1 to 127 (MRATPLAASA…QHVARPTEVL (127 aa)) is interaction with DDIT3/CHOP. Positions 36-61 (RDEPEPGPLPSLLPPSPPPASDLSPA) are disordered. Over residues 41 to 55 (PGPLPSLLPPSPPPA) the composition is skewed to pro residues. One can recognise a Protein kinase domain in the interval 68 to 315 (LGPYILLERE…ALGILLHPWL (248 aa)). Positions 320–333 (GRVSPPQSDRREMD) are enriched in basic and acidic residues. A disordered region spans residues 320 to 354 (GRVSPPQSDRREMDQVVPDGPQLEEAEEGEVGLYG). Over residues 341 to 354 (QLEEAEEGEVGLYG) the composition is skewed to acidic residues.

Belongs to the protein kinase superfamily. CAMK Ser/Thr protein kinase family. Tribbles subfamily. Interacts with AKT1, AKT2, MAP2K1 and MAP2K7. Interacts with ATF4. Interacts with DDIT3/CHOP and inhibits its interaction with EP300/P300. Interacts with APOBEC3C. Interacts (via N-terminus) with APOBEC3A. Interacts with RELA. Highly expressed in liver. Not detected in heart, brain, spleen, lung, skeletal muscle, kidney or testis.

The protein resides in the nucleus. Functionally, inactive protein kinase which acts as a regulator of the integrated stress response (ISR), a process for adaptation to various stress. Inhibits the transcriptional activity of DDIT3/CHOP and is involved in DDIT3/CHOP-dependent cell death during ER stress. May play a role in programmed neuronal cell death but does not appear to affect non-neuronal cells. Acts as a negative feedback regulator of the ATF4-dependent transcription during the ISR: while TRIB3 expression is promoted by ATF4, TRIB3 protein interacts with ATF4 and inhibits ATF4 transcription activity. Disrupts insulin signaling by binding directly to Akt kinases and blocking their activation. May bind directly to and mask the 'Thr-308' phosphorylation site in AKT1. Interacts with the NF-kappa-B transactivator p65 RELA and inhibits its phosphorylation and thus its transcriptional activation activity. Interacts with MAPK kinases and regulates activation of MAP kinases. Can inhibit APOBEC3A editing of nuclear DNA. This chain is Tribbles homolog 3 (Trib3), found in Mus musculus (Mouse).